The sequence spans 578 residues: Zinc finger-containing ubiquitin peptidase 1 (578 aa).

A C2H2-type 1 zinc finger spans residues 2–24; it reads LSCNICGETVTSEPDMKAHLIVH. A C2H2-type 2; atypical zinc finger spans residues 29 to 52; sequence IICPFCKLSGVNYDEMCFHIETAH. 2 consecutive C2H2-type zinc fingers follow at residues 154-177 and 193-215; these read PECP…KTKH and YDCP…VDLH. Residues 226-248 form an MIU region; sequence DRVQCSGDLQLAHQLQQEEDRKR. The segment at 249–274 is zUBD/ZHA; sequence RSEESRQEIEEFQKLQRQYGLDNSGG. At Lys262 the chain carries N6-acetyllysine. Cys360 acts as the Nucleophile in catalysis. Residue His491 is the Proton acceptor of the active site. Asp512 is a catalytic residue.

The protein belongs to the peptidase C78 family. ZUFSP subfamily. Interacts with RPA1 and RPA2.

It localises to the cytoplasm. The protein localises to the nucleus. The enzyme catalyses Thiol-dependent hydrolysis of ester, thioester, amide, peptide and isopeptide bonds formed by the C-terminal Gly of ubiquitin (a 76-residue protein attached to proteins as an intracellular targeting signal).. In terms of biological role, deubiquitinase with endodeubiquitinase activity that specifically interacts with and cleaves 'Lys-63'-linked long polyubiquitin chains. Shows only weak activity against 'Lys-11' and 'Lys-48'-linked chains. Plays an important role in genome stability pathways, functioning to prevent spontaneous DNA damage and also promote cellular survival in response to exogenous DNA damage. Modulates the ubiquitination status of replication protein A (RPA) complex proteins in response to replication stress. This chain is Zinc finger-containing ubiquitin peptidase 1, found in Homo sapiens (Human).